A 664-amino-acid chain; its full sequence is Alkaline/neutral invertase C, mitochondrial (664 aa).

Phosphoserine is present on residues Ser-41, Ser-125, and Ser-657.

This sequence belongs to the glycosyl hydrolase 100 family. As to expression, expressed in seedlings, roots and flowers.

The protein resides in the mitochondrion. The enzyme catalyses Hydrolysis of terminal non-reducing beta-D-fructofuranoside residues in beta-D-fructofuranosides.. Its function is as follows. Mitochondrial invertase that cleaves sucrose into glucose and fructose and is involved in the regulation of aerial tissue development and floral transition. May be modulating hormone balance in relation to the radicle emergence. The polypeptide is Alkaline/neutral invertase C, mitochondrial (Arabidopsis thaliana (Mouse-ear cress)).